A 1622-amino-acid polypeptide reads, in one-letter code: Ferredoxin-dependent glutamate synthase 1, chloroplastic/mitochondrial (1622 aa).

The transit peptide at 1 to 105 (MAMQSLSPVP…LEDILSERGA (105 aa)) directs the protein to the chloroplast and mitochondrion. The active-site For GATase activity is cysteine 106. The Glutamine amidotransferase type-2 domain maps to 106 to 505 (CGVGFIANLD…PGMMIAVDLV (400 aa)). 1184 to 1241 (LTETHQTLIANGLRERVILRVDGGLKSGVDVLMAAAMGADEYGFGSLAMIATGCVMAR) contributes to the FMN binding site. Positions 1237, 1243, and 1248 each coordinate [3Fe-4S] cluster.

This sequence belongs to the glutamate synthase family. Interacts with SHM1. Requires [3Fe-4S] cluster as cofactor. FAD serves as cofactor. It depends on FMN as a cofactor. Highly expressed in leaves. High expression in the leaf mesophyll and phloem companion cell-sieve element complex.

It is found in the plastid. The protein resides in the chloroplast stroma. It localises to the mitochondrion matrix. It carries out the reaction 2 oxidized [2Fe-2S]-[ferredoxin] + 2 L-glutamate = L-glutamine + 2 reduced [2Fe-2S]-[ferredoxin] + 2-oxoglutarate + 2 H(+). It participates in amino-acid biosynthesis; L-glutamate biosynthesis via GLT pathway; L-glutamate from 2-oxoglutarate and L-glutamine (ferredoxin route): step 1/1. Its pathway is energy metabolism; nitrogen metabolism. Involved in glutamate biosynthesis in leaf. Required for the reassimilation of ammonium ions generated during photorespiration. The polypeptide is Ferredoxin-dependent glutamate synthase 1, chloroplastic/mitochondrial (Arabidopsis thaliana (Mouse-ear cress)).